The chain runs to 525 residues: Arylsulfatase G (525 aa).

A signal peptide spans M1 to S16. The Ca(2+) site is built by D44, D45, and C84. C84 (nucleophile) is an active-site residue. Residue C84 is modified to 3-oxoalanine (Cys). A glycan (N-linked (GlcNAc...) asparagine) is linked at N117. Position 137 (K137) interacts with substrate. The active site involves H139. S162 is a substrate binding site. N-linked (GlcNAc...) asparagine glycosylation occurs at N215. Residue H251 coordinates substrate. The Ca(2+) site is built by D302 and N303. Residues N356 and N497 are each glycosylated (N-linked (GlcNAc...) asparagine).

It belongs to the sulfatase family. The cofactor is Ca(2+). In terms of processing, N-glycosylated with both high mannose and complex type sugars. Post-translationally, the conversion to 3-oxoalanine (also known as C-formylglycine, FGly), of a serine or cysteine residue in prokaryotes and of a cysteine residue in eukaryotes, is critical for catalytic activity. The 63-kDa precursor undergoes proteolytic processing in two steps, yielding two fragments in the first step (apparent molecular masses of 44 and 18 kDa). In the second step, the 44-kDa fragment is processed further to the 34- and 10-kDa chains. The 10-kDa chain is a cleavage product of the 44-kDa fragment but linked to the 18-kDa chain through a disulfide bridge. As to expression, highly expressed in the spleen, kidney, liver, brain, and testis (at protein level).

It is found in the lysosome. The enzyme catalyses an aryl sulfate + H2O = a phenol + sulfate + H(+). It catalyses the reaction Hydrolysis of the 3-sulfate groups of the N-sulfo-D-glucosamine 3-O-sulfate units of heparin.. In terms of biological role, displays arylsulfatase activity at acidic pH towards the artificial substrate p-nitrocatechol sulfate. Catalyzes the hydrolysis of the 3-sulfate groups of the N-sulfo-D-glucosamine 3-O-sulfate units of heparin. In Mus musculus (Mouse), this protein is Arylsulfatase G (Arsg).